Consider the following 166-residue polypeptide: MYYPAVQVLIGIILVDNFNTEFLSSEKKNCKTDTDCKDKGHHCVRGTCTDISCLEAVKQDIKDINLDPSIRSCNYTPDFYTFNSTTADLQSPFGKTRIDYGSIYTSDWSSIDHCQSLCCKHNDCIGWEFDKIESSHGGECYFYTNPHPALKNSNDTTIMGIARNIL.

Position 1 (M1) is a topological domain, intravirion. Residues 2 to 22 traverse the membrane as a helical segment; sequence YYPAVQVLIGIILVDNFNTEF. Over 23–166 the chain is Virion surface; that stretch reads LSSEKKNCKT…TIMGIARNIL (144 aa).

The protein belongs to the asfivirus envelope protein p22 family.

Its subcellular location is the virion membrane. It is found in the host cell membrane. The chain is Putative membrane protein 162 from African swine fever virus (isolate Tick/Malawi/Lil 20-1/1983) (ASFV).